The sequence spans 389 residues: MEETNTHCAPPPPAGSQTGVSQANLSSAPPNCSTEGYIYQDSIALPWKVLLILVLALFTLATTLSNAFVIATVYRTRKLHTPANYLIASLAVTDLLVSILVMPISTMYTVTGRWTLGQVVCDFWLSSDITCCTASILHLCVIALDRYWAITDAVEYSAKRTPKRAAVMIALVWVFSISISLPPFFWRQAKAEEEVSDCRVNTDHMLYTVYSTVGAFYFPTLLLIALYGRIYVEARSRILKQTPNRTGKRLTRAQLITDSPGSTSSVTSVNSRAPDVPSESGSPVYVNQVKVRVSDALLEKKKLMAARERKATKTLGIILGAFIVCWLPFFIISLVMPICKDACWFHLAIFDFFTWLGYLNSLINPIIYTMSNEDFKQAFHKLIRFKCTG.

Residues 1 to 27 (MEETNTHCAPPPPAGSQTGVSQANLSS) are disordered. The Extracellular portion of the chain corresponds to 1–45 (MEETNTHCAPPPPAGSQTGVSQANLSSAPPNCSTEGYIYQDSIAL). Polar residues predominate over residues 15-27 (GSQTGVSQANLSS). Residues N24 and N31 are each glycosylated (N-linked (GlcNAc...) asparagine). Residues 46 to 71 (PWKVLLILVLALFTLATTLSNAFVIA) traverse the membrane as a helical segment. Residues 72 to 85 (TVYRTRKLHTPANY) lie on the Cytoplasmic side of the membrane. A helical transmembrane segment spans residues 86-110 (LIASLAVTDLLVSILVMPISTMYTV). The Extracellular portion of the chain corresponds to 111–118 (TGRWTLGQ). A helical transmembrane segment spans residues 119-144 (VVCDFWLSSDITCCTASILHLCVIAL). C121 and C198 are joined by a disulfide. The ergotamine site is built by D128 and T133. The DRY motif; important for ligand-induced conformation changes and signaling signature appears at 145-147 (DRY). Residues 145–164 (DRYWAITDAVEYSAKRTPKR) are Cytoplasmic-facing. A helical transmembrane segment spans residues 165-183 (AAVMIALVWVFSISISLPP). Topologically, residues 184 to 204 (FFWRQAKAEEEVSDCRVNTDH) are extracellular. Residue V200 participates in ergotamine binding. A helical transmembrane segment spans residues 205 to 228 (MLYTVYSTVGAFYFPTLLLIALYG). Over 229-314 (RIYVEARSRI…AARERKATKT (86 aa)) the chain is Cytoplasmic. The span at 258 to 271 (DSPGSTSSVTSVNS) shows a compositional bias: polar residues. The segment at 258–281 (DSPGSTSSVTSVNSRAPDVPSESG) is disordered. The chain crosses the membrane as a helical span at residues 315–336 (LGIILGAFIVCWLPFFIISLVM). Residues 337–346 (PICKDACWFH) are Extracellular-facing. The helical transmembrane segment at 347 to 369 (LAIFDFFTWLGYLNSLINPIIYT) threads the bilayer. Residues 364 to 368 (NPIIY) carry the NPxxY motif; important for ligand-induced conformation changes and signaling motif. Over 370 to 389 (MSNEDFKQAFHKLIRFKCTG) the chain is Cytoplasmic. The S-palmitoyl cysteine moiety is linked to residue C387.

Belongs to the G-protein coupled receptor 1 family. In terms of assembly, homodimer. Heterodimer with HTR1D. Post-translationally, phosphorylated. Desensitization of the receptor may be mediated by its phosphorylation. Palmitoylated.

It localises to the cell membrane. In terms of biological role, G-protein coupled receptor for 5-hydroxytryptamine (serotonin). Also functions as a receptor for ergot alkaloid derivatives, various anxiolytic and antidepressant drugs and other psychoactive substances, such as lysergic acid diethylamide (LSD). Ligand binding causes a conformation change that triggers signaling via guanine nucleotide-binding proteins (G proteins) and modulates the activity of downstream effectors, such as adenylate cyclase. HTR1B is coupled to G(i)/G(o) G alpha proteins and mediates inhibitory neurotransmission by inhibiting adenylate cyclase activity. Arrestin family members inhibit signaling via G proteins and mediate activation of alternative signaling pathways. Regulates the release of 5-hydroxytryptamine, dopamine and acetylcholine in the brain, and thereby affects neural activity, nociceptive processing, pain perception, mood and behavior. Besides, plays a role in vasoconstriction of cerebral arteries. The polypeptide is 5-hydroxytryptamine receptor 1B (HTR1B) (Felis catus (Cat)).